The chain runs to 122 residues: Large ribosomal subunit protein bL12 (122 aa).

Residues 94–122 (GNVKEGLSKEDAEEMKEKLEEAGATVELK) are disordered. Over residues 99–114 (GLSKEDAEEMKEKLEE) the composition is skewed to basic and acidic residues.

The protein belongs to the bacterial ribosomal protein bL12 family. As to quaternary structure, homodimer. Part of the ribosomal stalk of the 50S ribosomal subunit. Forms a multimeric L10(L12)X complex, where L10 forms an elongated spine to which 2 to 4 L12 dimers bind in a sequential fashion. Binds GTP-bound translation factors.

Functionally, forms part of the ribosomal stalk which helps the ribosome interact with GTP-bound translation factors. Is thus essential for accurate translation. This chain is Large ribosomal subunit protein bL12, found in Halanaerobium praevalens.